The sequence spans 505 residues: Lysine--tRNA ligase (505 aa).

Mg(2+) is bound by residues glutamate 415 and glutamate 422.

Belongs to the class-II aminoacyl-tRNA synthetase family. As to quaternary structure, homodimer. Mg(2+) serves as cofactor.

Its subcellular location is the cytoplasm. It carries out the reaction tRNA(Lys) + L-lysine + ATP = L-lysyl-tRNA(Lys) + AMP + diphosphate. The chain is Lysine--tRNA ligase from Escherichia coli O157:H7.